Consider the following 700-residue polypeptide: Elongation factor G (700 aa).

The 276-residue stretch at 13–288 folds into the tr-type G domain; it reads SKIRNIGITA…AVIDYLPAPD (276 aa). GTP contacts are provided by residues 22-29, 86-90, and 140-143; these read AHIDAGKT, DTPGH, and NKLD.

This sequence belongs to the TRAFAC class translation factor GTPase superfamily. Classic translation factor GTPase family. EF-G/EF-2 subfamily.

Its subcellular location is the cytoplasm. Functionally, catalyzes the GTP-dependent ribosomal translocation step during translation elongation. During this step, the ribosome changes from the pre-translocational (PRE) to the post-translocational (POST) state as the newly formed A-site-bound peptidyl-tRNA and P-site-bound deacylated tRNA move to the P and E sites, respectively. Catalyzes the coordinated movement of the two tRNA molecules, the mRNA and conformational changes in the ribosome. This chain is Elongation factor G, found in Gluconobacter oxydans (strain 621H) (Gluconobacter suboxydans).